We begin with the raw amino-acid sequence, 159 residues long: Transcription elongation factor GreA (159 aa).

Residues 47–77 (SENAEYDAARDKQATIENEITEIQHILDNYE) are a coiled coil.

The protein belongs to the GreA/GreB family.

In terms of biological role, necessary for efficient RNA polymerase transcription elongation past template-encoded arresting sites. The arresting sites in DNA have the property of trapping a certain fraction of elongating RNA polymerases that pass through, resulting in locked ternary complexes. Cleavage of the nascent transcript by cleavage factors such as GreA or GreB allows the resumption of elongation from the new 3'terminus. GreA releases sequences of 2 to 3 nucleotides. This Metamycoplasma arthritidis (strain 158L3-1) (Mycoplasma arthritidis) protein is Transcription elongation factor GreA.